The following is a 475-amino-acid chain: MTWEVVIGLEIHAQLTTKTKIFSGSSIDYGAAPNTQANLLDLGMPGQLPVLNKAVIPKAIKLGLALGAKIGRRSVFDRKNYFYPDLPKGYQTSQFSFPIVDTGGVVEIEVDGEIKKIGVTRAHLEEDAGKSIHDAFPGQTGIDLNRAGTPLLEIVSEPDMRSAKEAVAYAKKMHELVQYLGICDGNMQEGSFRVDSNVSIHKPGTPFGTRAELKNINSFKFIEQAIELEIERQIEVLESGGKVVQETRLYDADKNETRSMREKEEANDYRYFPCPDLLPVVITEEDIEAIRAEMPEMPDAKRKRYVADFGLSDYDAAFLTGSRAMAEYFEAVVAKTNEAKVSANWVMGELSKSLNQKGIDISESPVSADMLAGLIERIQDNTISGKIAKQVFDGMWSGEGSADEIIEQKGLKQITDSSAIEALVNDVLANNAAQVEAYKGGQEKMFGFFVGQVMKASQGQANPAQVNQVLKDKLK.

The protein belongs to the GatB/GatE family. GatB subfamily. As to quaternary structure, heterotrimer of A, B and C subunits.

It carries out the reaction L-glutamyl-tRNA(Gln) + L-glutamine + ATP + H2O = L-glutaminyl-tRNA(Gln) + L-glutamate + ADP + phosphate + H(+). It catalyses the reaction L-aspartyl-tRNA(Asn) + L-glutamine + ATP + H2O = L-asparaginyl-tRNA(Asn) + L-glutamate + ADP + phosphate + 2 H(+). In terms of biological role, allows the formation of correctly charged Asn-tRNA(Asn) or Gln-tRNA(Gln) through the transamidation of misacylated Asp-tRNA(Asn) or Glu-tRNA(Gln) in organisms which lack either or both of asparaginyl-tRNA or glutaminyl-tRNA synthetases. The reaction takes place in the presence of glutamine and ATP through an activated phospho-Asp-tRNA(Asn) or phospho-Glu-tRNA(Gln). The protein is Aspartyl/glutamyl-tRNA(Asn/Gln) amidotransferase subunit B of Hydrogenovibrio crunogenus (strain DSM 25203 / XCL-2) (Thiomicrospira crunogena).